The chain runs to 89 residues: uncharacterized protein (89 aa).

Composition is skewed to basic residues over residues 1 to 17 (MPPH…HGHH) and 65 to 89 (HHGH…HGHH). Disordered stretches follow at residues 1 to 25 (MPPH…ITPV) and 60 to 89 (LETG…HGHH).

This is an uncharacterized protein from Dictyostelium discoideum (Social amoeba).